Reading from the N-terminus, the 430-residue chain is Histidine--tRNA ligase (430 aa).

This sequence belongs to the class-II aminoacyl-tRNA synthetase family. As to quaternary structure, homodimer.

It localises to the cytoplasm. The enzyme catalyses tRNA(His) + L-histidine + ATP = L-histidyl-tRNA(His) + AMP + diphosphate + H(+). In Acinetobacter baumannii (strain SDF), this protein is Histidine--tRNA ligase.